We begin with the raw amino-acid sequence, 184 residues long: Probable type 3 secretion system regulator AscH (184 aa).

Residues 1 to 25 (MKIEGSDQLGGEQPQRQPLPPESMA) are disordered.

The protein belongs to the YopR family.

It localises to the secreted. In terms of biological role, may be involved in the regulation of the assembly of the type III secretion system (T3SS), also called injectisome, which is used to inject bacterial effector proteins into eukaryotic host cells. May control the polymerization of the needle. This Aeromonas salmonicida subsp. salmonicida protein is Probable type 3 secretion system regulator AscH.